A 366-amino-acid polypeptide reads, in one-letter code: Uroporphyrinogen decarboxylase (366 aa).

Residues 28 to 32 (RQAGR), D78, Y160, T215, and H333 contribute to the substrate site.

It belongs to the uroporphyrinogen decarboxylase family. As to quaternary structure, homodimer.

It localises to the cytoplasm. The catalysed reaction is uroporphyrinogen III + 4 H(+) = coproporphyrinogen III + 4 CO2. Its pathway is porphyrin-containing compound metabolism; protoporphyrin-IX biosynthesis; coproporphyrinogen-III from 5-aminolevulinate: step 4/4. In terms of biological role, catalyzes the decarboxylation of four acetate groups of uroporphyrinogen-III to yield coproporphyrinogen-III. The protein is Uroporphyrinogen decarboxylase of Paraburkholderia xenovorans (strain LB400).